A 480-amino-acid chain; its full sequence is Trigger factor (480 aa).

In terms of domain architecture, PPIase FKBP-type spans 161–249 (GDRLLITGKF…VVEVLKEQLP (89 aa)). The tract at residues 426 to 480 (TEEPVEKEAEEKNEEFAIDHEVLPTKDHDAIPAAKYDDNTPKGAETEDKQEKDKD) is disordered. Residues 429–480 (PVEKEAEEKNEEFAIDHEVLPTKDHDAIPAAKYDDNTPKGAETEDKQEKDKD) are compositionally biased toward basic and acidic residues.

The protein belongs to the FKBP-type PPIase family. Tig subfamily.

It localises to the cytoplasm. It carries out the reaction [protein]-peptidylproline (omega=180) = [protein]-peptidylproline (omega=0). Functionally, involved in protein export. Acts as a chaperone by maintaining the newly synthesized protein in an open conformation. Functions as a peptidyl-prolyl cis-trans isomerase. This is Trigger factor from Rhodopirellula baltica (strain DSM 10527 / NCIMB 13988 / SH1).